The primary structure comprises 360 residues: DNA replication and repair protein RecF (360 aa).

Residue 30-37 (GQNGSGKT) participates in ATP binding.

This sequence belongs to the RecF family.

Its subcellular location is the cytoplasm. Its function is as follows. The RecF protein is involved in DNA metabolism; it is required for DNA replication and normal SOS inducibility. RecF binds preferentially to single-stranded, linear DNA. It also seems to bind ATP. This is DNA replication and repair protein RecF from Shewanella sp. (strain MR-4).